A 205-amino-acid polypeptide reads, in one-letter code: 3-demethoxyubiquinol 3-hydroxylase (205 aa).

Fe cation contacts are provided by glutamate 54, glutamate 84, histidine 87, glutamate 136, glutamate 168, and histidine 171.

The protein belongs to the COQ7 family. Requires Fe cation as cofactor.

Its subcellular location is the cell membrane. It catalyses the reaction a 5-methoxy-2-methyl-3-(all-trans-polyprenyl)benzene-1,4-diol + AH2 + O2 = a 3-demethylubiquinol + A + H2O. Its pathway is cofactor biosynthesis; ubiquinone biosynthesis. In terms of biological role, catalyzes the hydroxylation of 2-nonaprenyl-3-methyl-6-methoxy-1,4-benzoquinol during ubiquinone biosynthesis. In Acidovorax sp. (strain JS42), this protein is 3-demethoxyubiquinol 3-hydroxylase.